The primary structure comprises 138 residues: Transcription antitermination protein NusB (138 aa).

The protein belongs to the NusB family.

Involved in transcription antitermination. Required for transcription of ribosomal RNA (rRNA) genes. Binds specifically to the boxA antiterminator sequence of the ribosomal RNA (rrn) operons. This Desulforudis audaxviator (strain MP104C) protein is Transcription antitermination protein NusB.